Consider the following 749-residue polypeptide: Photosystem I P700 chlorophyll a apoprotein A1 (749 aa).

8 helical membrane-spanning segments follow: residues 70–93 (VFSA…FHGA), 156–179 (LYAT…FHYH), 195–219 (LNHH…HVSL), 291–309 (TAHH…GHMY), 346–369 (WHAQ…HHMY), 385–411 (LSLF…IFLV), 433–455 (AIIS…LYIH), and 531–549 (FLVH…LILL). 2 residues coordinate [4Fe-4S] cluster: Cys-573 and Cys-582. 2 consecutive transmembrane segments (helical) span residues 589 to 610 (HVFL…HFSW) and 663 to 685 (LSAY…MFLF). His-674 provides a ligand contact to chlorophyll a'. 2 residues coordinate chlorophyll a: Met-682 and Tyr-690. Phylloquinone is bound at residue Trp-691. A helical membrane pass occupies residues 723 to 743 (AVGVAHYLLGGIATTWAFFLA).

The protein belongs to the PsaA/PsaB family. As to quaternary structure, the PsaA/B heterodimer binds the P700 chlorophyll special pair and subsequent electron acceptors. PSI consists of a core antenna complex that captures photons, and an electron transfer chain that converts photonic excitation into a charge separation. The eukaryotic PSI reaction center is composed of at least 11 subunits. P700 is a chlorophyll a/chlorophyll a' dimer, A0 is one or more chlorophyll a, A1 is one or both phylloquinones and FX is a shared 4Fe-4S iron-sulfur center. serves as cofactor.

Its subcellular location is the plastid. It localises to the chloroplast thylakoid membrane. The enzyme catalyses reduced [plastocyanin] + hnu + oxidized [2Fe-2S]-[ferredoxin] = oxidized [plastocyanin] + reduced [2Fe-2S]-[ferredoxin]. Its function is as follows. PsaA and PsaB bind P700, the primary electron donor of photosystem I (PSI), as well as the electron acceptors A0, A1 and FX. PSI is a plastocyanin-ferredoxin oxidoreductase, converting photonic excitation into a charge separation, which transfers an electron from the donor P700 chlorophyll pair to the spectroscopically characterized acceptors A0, A1, FX, FA and FB in turn. Oxidized P700 is reduced on the lumenal side of the thylakoid membrane by plastocyanin. The chain is Photosystem I P700 chlorophyll a apoprotein A1 from Zygnema circumcarinatum (Green alga).